We begin with the raw amino-acid sequence, 318 residues long: Large ribosomal subunit protein uL10 (318 aa).

A Phosphotyrosine modification is found at Y24. Phosphothreonine is present on T59. A Glycyl lysine isopeptide (Lys-Gly) (interchain with G-Cter in ubiquitin) cross-link involves residue K264. A Glycyl lysine isopeptide (Lys-Gly) (interchain with G-Cter in SUMO1); alternate cross-link involves residue K298. A Glycyl lysine isopeptide (Lys-Gly) (interchain with G-Cter in SUMO2); alternate cross-link involves residue K298. The segment at 298–318 (KVEAKEESEESDEDMGFGLFD) is disordered. Residues 303–312 (EESEESDEDM) show a composition bias toward acidic residues. Phosphoserine is present on residues S305 and S308.

The protein belongs to the universal ribosomal protein uL10 family. As to quaternary structure, P0 forms a pentameric complex by interaction with dimers of P1 and P2. Identified in a IGF2BP1-dependent mRNP granule complex containing untranslated mRNAs. Interacts with APEX1. Interacts with FMR1 isoform 6. In terms of processing, ubiquitinated at Lys-264 by RNF14 and RNF25 in response to ribosome collisions (ribosome stalling).

The protein resides in the nucleus. It localises to the cytoplasm. Functionally, ribosomal protein P0 is the functional equivalent of E.coli protein L10. The sequence is that of Large ribosomal subunit protein uL10 (RPLP0) from Oryctolagus cuniculus (Rabbit).